A 307-amino-acid polypeptide reads, in one-letter code: Malate dehydrogenase (307 aa).

NAD(+)-binding positions include 8 to 13 (GAGRVG) and D33. The substrate site is built by R82 and R88. NAD(+)-binding positions include N95 and 118–120 (VSN). The substrate site is built by N120 and R151. H175 (proton acceptor) is an active-site residue.

The protein belongs to the LDH/MDH superfamily. MDH type 3 family.

The enzyme catalyses (S)-malate + NAD(+) = oxaloacetate + NADH + H(+). Functionally, catalyzes the reversible oxidation of malate to oxaloacetate. This chain is Malate dehydrogenase, found in Thioalkalivibrio sulfidiphilus (strain HL-EbGR7).